Reading from the N-terminus, the 347-residue chain is Dual specificity mitogen-activated protein kinase kinase 3 (347 aa).

N-acetylmethionine is present on M1. Positions 1-11 (MESPAASPPAS) are enriched in pro residues. Positions 1–45 (MESPAASPPASLPQTKGKSKRKKDLRISCVSKPPVSNPTPPRNLD) are disordered. Phosphoserine is present on S3. The region spanning 64-325 (LVTISELGRG…YLELMEHPFF (262 aa)) is the Protein kinase domain. Residues 70-78 (LGRGAYGVV) and K93 contribute to the ATP site. Residue D190 is the Proton acceptor of the active site. A Phosphoserine modification is found at S218. T222 carries the phosphothreonine modification.

The protein belongs to the protein kinase superfamily. STE Ser/Thr protein kinase family. MAP kinase kinase subfamily. As to quaternary structure, component of a signaling complex containing at least AKAP13, PKN1, MAPK14, ZAK and MAP2K3. Within this complex, AKAP13 interacts directly with PKN1, which in turn recruits MAPK14, MAP2K3 and ZAK. Binds to DYRK1B/MIRK and increases its kinase activity. Part of a complex with MAP3K3, RAC1 and CCM2. Interacts with ARRB1. Autophosphorylated. Phosphorylation on Ser-218 and Thr-222 by MAP kinase kinase kinases positively regulates the kinase activity. Phosphorylated by TAOK2.

The enzyme catalyses L-seryl-[protein] + ATP = O-phospho-L-seryl-[protein] + ADP + H(+). The catalysed reaction is L-threonyl-[protein] + ATP = O-phospho-L-threonyl-[protein] + ADP + H(+). It carries out the reaction L-tyrosyl-[protein] + ATP = O-phospho-L-tyrosyl-[protein] + ADP + H(+). Its activity is regulated as follows. Activated by dual phosphorylation on Ser-218 and Thr-222. Its function is as follows. Dual specificity kinase. Is activated by cytokines and environmental stress in vivo. Catalyzes the concomitant phosphorylation of a threonine and a tyrosine residue in the MAP kinase p38. Part of a signaling cascade that begins with the activation of the adrenergic receptor ADRA1B and leads to the activation of MAPK14. The protein is Dual specificity mitogen-activated protein kinase kinase 3 (Map2k3) of Mus musculus (Mouse).